Consider the following 396-residue polypeptide: Phosphoglycerate kinase (396 aa).

Residues 21–23 (DFN), arginine 36, 59–62 (HLGK), arginine 119, and arginine 156 each bind substrate. ATP contacts are provided by residues lysine 206, glycine 294, glutamate 325, and 352–355 (GGDS).

It belongs to the phosphoglycerate kinase family. In terms of assembly, monomer.

It is found in the cytoplasm. It catalyses the reaction (2R)-3-phosphoglycerate + ATP = (2R)-3-phospho-glyceroyl phosphate + ADP. It participates in carbohydrate degradation; glycolysis; pyruvate from D-glyceraldehyde 3-phosphate: step 2/5. The chain is Phosphoglycerate kinase from Listeria welshimeri serovar 6b (strain ATCC 35897 / DSM 20650 / CCUG 15529 / CIP 8149 / NCTC 11857 / SLCC 5334 / V8).